The sequence spans 93 residues: Large ribosomal subunit protein bL27 (93 aa).

The propeptide occupies 1–8 (MIMDLQFF). A disordered region spans residues 8–29 (FSHHKGGGSTANGRNSAGRRLG).

Belongs to the bacterial ribosomal protein bL27 family. Post-translationally, the N-terminus is cleaved by ribosomal processing cysteine protease Prp.

The sequence is that of Large ribosomal subunit protein bL27 from Limosilactobacillus fermentum (strain NBRC 3956 / LMG 18251) (Lactobacillus fermentum).